The primary structure comprises 6874 residues: Nesprin-2 (6874 aa).

Positions 1-286 (MAASPVLPTE…MTYVAQFLKY (286 aa)) are actin-binding. At 1-6823 (MAASPVLPTE…RRSFLSRVIR (6823 aa)) the chain is on the cytoplasmic side. 2 Calponin-homology (CH) domains span residues 31 to 136 (DTQK…LHFH) and 183 to 288 (WSAK…KYSK). 4 Spectrin repeats span residues 299–380 (AKVR…HQVA), 381–474 (AWRA…RINN), 475–577 (VLGK…QYIH), and 578–680 (NTKA…IQDQ). Positions 299 to 6767 (AKVRDALVWL…PDASLTSFDE (6469 aa)) form a coiled coil. Residues 675 to 723 (VKIQDQPPGNSSGTSLSKESAMAAEPGGSRGEDVKAAEKQEVEDEESAG) form a disordered region. A compositionally biased stretch (polar residues) spans 681 to 692 (PPGNSSGTSLSK). Over residues 704–714 (RGEDVKAAEKQ) the composition is skewed to basic and acidic residues. 31 Spectrin repeats span residues 727–834 (VNEE…KNLS), 835–928 (DEPL…LRHE), 929–1030 (ISLY…KCAS), 1120–1211 (TQRG…LLNT), 1262–1322 (DIRD…DALD), 1323–1409 (ALEG…QSKE), 1410–1514 (EGPP…ASVT), 1515–1626 (ESLE…KTEE), 1627–1728 (YGEN…AGGS), 1729–1820 (NSYA…TKKN), 1821–1928 (ALQD…AGEL), 1929–2026 (NNSF…EEED), 2027–2122 (KLPA…LANT), 2123–2233 (YLSH…SVQK), 2234–2350 (LEGH…LNSI), 2422–2503 (DERE…TLKK), 2504–2610 (TKER…KCFQ), 2611–2707 (QATE…EALE), 2708–2821 (PLNR…QLEL), 2822–2923 (KLEE…FLQN), 2924–3027 (NGSE…GKIK), 3028–3133 (QLDT…NMLL), 3134–3239 (ELQP…SLRA), 3240–3343 (DVLN…AQEA), 3344–3456 (EEER…QWGG), 3457–3563 (ELKR…TTRK), 3564–3669 (NKDL…SSEV), 3670–3767 (SKSS…ESRT), 3768–3870 (SQLN…QIME), 3871–3976 (ALPH…VTQE), and 3977–4074 (QNEL…KPSA). The segment at 2338-2397 (SAKQETENGLNSILKSKSSTEKHVKFSLPVEEMPATSEVPKPTRESAAVGESGGARETNT) is disordered. A compositionally biased stretch (polar residues) spans 2344–2354 (ENGLNSILKSK). Disordered stretches follow at residues 4062–4152 (KQEQ…ATIV), 4171–4193 (APDS…TDEG), 4326–4348 (FSED…DQPA), and 4401–4429 (HQEN…DSTL). Residues 4081–4091 (VAERDASERKL) are compositionally biased toward basic and acidic residues. Serine 4096 carries the phosphoserine modification. Basic and acidic residues predominate over residues 4110-4122 (SSVKSEDGRRRTE). One copy of the Spectrin 36 repeat lies at 4218 to 4337 (RSRPRPADIL…EDQHPSTLKK (120 aa)). Over residues 4326–4345 (FSEDQHPSTLKKPSEPHDVD) the composition is skewed to basic and acidic residues. The segment covering 4409 to 4429 (RQSASSSKVPSPGNAASDSTL) has biased composition (polar residues). 17 Spectrin repeats span residues 4507–4626 (SMTE…RSYQ), 4627–4714 (NEVK…RARY), 4715–4823 (LELS…QSML), 4824–4929 (QKWE…QTLL), 4930–5037 (KHLL…QEKL), 5038–5150 (HQLQ…KIQH), 5151–5252 (LEQL…SQVH), 5253–5377 (QLRA…KAPH), 5378–5473 (NAHA…MLLA), 5474–5576 (KSNE…YSEL), 5577–5691 (QGNG…QWRF), 5692–5786 (FTTS…LSLG), 5787–5894 (EVIS…RVAI), 5895–6004 (RKQE…VKKL), 6005–6122 (KETF…EETW), 6123–6230 (RLWQ…LRYF), and 6231–6342 (TNQR…PGLD). The tract at residues 5435-5459 (NSTLSDQLPQPEERSTPGLHSGQRH) is disordered. Serine 5772 carries the post-translational modification Phosphoserine. Positions 6336–6473 (SHTPGLDDEK…TEAPVPTDAS (138 aa)) are disordered. The span at 6341-6354 (LDDEKEASENETDI) shows a compositional bias: acidic residues. 7 positions are modified to phosphoserine: serine 6348, serine 6371, serine 6400, serine 6417, serine 6418, serine 6419, and serine 6448. Over residues 6355 to 6372 (EDPREIQADSWRKRRESE) the composition is skewed to basic and acidic residues. Spectrin repeat units follow at residues 6450-6534 (SHSK…KLRL), 6535-6650 (KQTV…QCQD), and 6651-6767 (FHQL…SFDE). The tract at residues 6790-6812 (EEEEEEEETDSRMPHLDSPGSSQ) is disordered. The KASH domain occupies 6815-6874 (RSFLSRVIRAALPLQLLLLLLLLLACLLPASEDDYSCTQANNFARSFYPMLRYTNGPPPT). Residues 6824–6844 (AALPLQLLLLLLLLLACLLPA) form a helical; Anchor for type IV membrane protein membrane-spanning segment. The Perinuclear space portion of the chain corresponds to 6845-6874 (SEDDYSCTQANNFARSFYPMLRYTNGPPPT). A sufficient for interaction with SUN2 region spans residues 6861-6874 (FYPMLRYTNGPPPT).

This sequence belongs to the nesprin family. Core component of LINC complexes which are composed of inner nuclear membrane SUN domain-containing proteins coupled to outer nuclear membrane KASH domain-containing nesprins. SUN and KASH domain-containing proteins seem to bind each other promiscuously; however, some LINC complex constituents are tissue- or cell type-specific. At least SUN1/2-containing core LINC complexes are proposed to be hexameric composed of three protomers of each KASH and SUN domain-containing protein. The SUN2:SYNE2/KASH2 complex is a heterohexamer; the homotrimeric cloverleave-like conformation of the SUN domain is a prerequisite for LINC complex formation in which three separate SYNE2/KASH2 peptides bind at the interface of adjacent SUN domains. Interacts with EMD, LMNA, MKS3 and F-actin via its N-terminal domain. Interacts with DCTN1 and DYNC1I1/2; suggesting the association with the dynein-dynactin motor complex. Associates with kinesin motor complexes. Interacts with TMEM67. Interacts (via KASH domain) with TMEM258. Interacts with BROX; this interaction promotes SYN2 ubiquitination and facilitates the relaxation of mechanical stress imposed by compressive actin fibers at the rupture site. In terms of processing, the disulfid bond with SUN2 is required for stability of the SUN2:SYNE2/KASH2 LINC complex under tensile forces though not required for the interaction. As to expression, C-terminal isoforms are highly expressed in the brain, hert and skeletal muscle. Isoform 1 (Nesprin-2 Giant) is most prevalent in the brain, skin, kidney and skeletal muscle.

It is found in the nucleus outer membrane. It localises to the sarcoplasmic reticulum membrane. Its subcellular location is the cell membrane. The protein resides in the cytoplasm. The protein localises to the cytoskeleton. It is found in the mitochondrion. It localises to the nucleus. Its subcellular location is the nucleoplasm. In terms of biological role, multi-isomeric modular protein which forms a linking network between organelles and the actin cytoskeleton to maintain the subcellular spatial organization. As a component of the LINC (LInker of Nucleoskeleton and Cytoskeleton) complex involved in the connection between the nuclear lamina and the cytoskeleton. The nucleocytoplasmic interactions established by the LINC complex play an important role in the transmission of mechanical forces across the nuclear envelope and in nuclear movement and positioning. Specifically, SYNE2 and SUN2 assemble in arrays of transmembrane actin-associated nuclear (TAN) lines which are bound to F-actin cables and couple the nucleus to retrograde actin flow during actin-dependent nuclear movement. May be involved in nucleus-centrosome attachment. During interkinetic nuclear migration (INM) at G2 phase and nuclear migration in neural progenitors its LINC complex association with SUN1/2 and probable association with cytoplasmic dynein-dynactin motor complexes functions to pull the nucleus toward the centrosome; SYNE1 and SYNE2 seem to act redundantly in cerebellum, midbrain, brain stem, and other brain regions except cerebral cortex and hippocampus. During INM at G1 phase mediates respective LINC complex association with kinesin to push the nucleus away from the centrosome. Involved in nuclear migration in retinal photoreceptor progenitors. Required for centrosome migration to the apical cell surface during early ciliogenesis. In Mus musculus (Mouse), this protein is Nesprin-2.